The primary structure comprises 262 residues: Abhydrolase domain-containing protein ACTT2-2 (262 aa).

The Peroxisomal targeting signal type 1 motif lies at 260-262 (SKL).

Belongs to the AB hydrolase superfamily. AKT2 hydrolase family.

It localises to the peroxisome. It participates in mycotoxin biosynthesis. Functionally, abhydrolase domain-containing protein; part of the gene clusters that mediate the biosynthesis of the host-selective toxins (HSTs) ACT-toxins responsible for brown spot of tangerine disease by the tangerine pathotype which affects tangerines and mandarins. ACT-toxins consist of three moieties, 9,10-epoxy-8-hydroxy-9-methyl-decatrienoic acid (EDA), valine and a polyketide. ACT-toxin I is toxic to both citrus and pear; toxin II the 5''-deoxy derivative of ACT-toxin I, is highly toxic to pear and slightly toxic to citrus. On cellular level, ACT-toxins affect plasma membrane of susceptible cells and cause a sudden increase in loss of K(+) after a few minutes of toxin treatment. The acyl-CoA ligase ACTT1, the hydrolase ACTT2, the enoyl-CoA hydratases ACTT3 and ACTT6, and the acyl-CoA synthetase ACTT5 are all involved in the biosynthesis of the AK-, AF- and ACT-toxin common 9,10-epoxy-8-hydroxy-9-methyl-decatrienoic acid (EDA) structural moiety. The exact role of each enzyme, and of additional enzymes identified within the AF-toxin clusters have still to be determined. On the other hand, ACTTS1 to ACTTS4 are specific to the tangerine pathotype. The function of ACTTS3 is to elongate the polyketide chain portion of ACT-toxin that is unique to this toxin. The enoyl-reductase ACTTS2 might complement the missing enoyl-reductase (ER) domain in ACTTS3 in the synthesis of the polyketide portion of ACT-toxin. The roles of the nonribosomal peptide synthetases-related proteins ACTTS1 and ACTTS4 have also still not been elucidated. The polypeptide is Abhydrolase domain-containing protein ACTT2-2 (ACTT2-2) (Alternaria alternata (Alternaria rot fungus)).